A 143-amino-acid chain; its full sequence is Small ribosomal subunit protein uS9A (143 aa).

Ser-2 carries the N-acetylserine modification. Lys-30 is covalently cross-linked (Glycyl lysine isopeptide (Lys-Gly) (interchain with G-Cter in ubiquitin)). The residue at position 34 (Ser-34) is a Phosphoserine. Residues Lys-47 and Lys-59 each participate in a glycyl lysine isopeptide (Lys-Gly) (interchain with G-Cter in ubiquitin) cross-link. Ser-61 carries the post-translational modification Phosphoserine. Position 70 is a phosphothreonine (Thr-70). Ser-76 is subject to Phosphoserine. The tract at residues 123–143 is disordered; the sequence is RPEPKKFGGKGARSRFQKSYR. Residues 134-143 are compositionally biased toward basic residues; the sequence is ARSRFQKSYR.

The protein belongs to the universal ribosomal protein uS9 family. In terms of assembly, component of the small ribosomal subunit (SSU). Mature yeast ribosomes consist of a small (40S) and a large (60S) subunit. The 40S small subunit contains 1 molecule of ribosomal RNA (18S rRNA) and 33 different proteins (encoded by 57 genes). The large 60S subunit contains 3 rRNA molecules (25S, 5.8S and 5S rRNA) and 46 different proteins (encoded by 81 genes).

It is found in the cytoplasm. Component of the ribosome, a large ribonucleoprotein complex responsible for the synthesis of proteins in the cell. The small ribosomal subunit (SSU) binds messenger RNAs (mRNAs) and translates the encoded message by selecting cognate aminoacyl-transfer RNA (tRNA) molecules. The large subunit (LSU) contains the ribosomal catalytic site termed the peptidyl transferase center (PTC), which catalyzes the formation of peptide bonds, thereby polymerizing the amino acids delivered by tRNAs into a polypeptide chain. The nascent polypeptides leave the ribosome through a tunnel in the LSU and interact with protein factors that function in enzymatic processing, targeting, and the membrane insertion of nascent chains at the exit of the ribosomal tunnel. The polypeptide is Small ribosomal subunit protein uS9A (Saccharomyces cerevisiae (strain ATCC 204508 / S288c) (Baker's yeast)).